Consider the following 1319-residue polypeptide: DNA-directed RNA polymerase subunit beta' (1319 aa).

Residues Cys-60, Cys-62, Cys-75, and Cys-78 each contribute to the Zn(2+) site. 3 residues coordinate Mg(2+): Asp-535, Asp-537, and Asp-539. The Zn(2+) site is built by Cys-890, Cys-971, Cys-978, and Cys-981.

This sequence belongs to the RNA polymerase beta' chain family. In terms of assembly, the RNAP catalytic core consists of 2 alpha, 1 beta, 1 beta' and 1 omega subunit. When a sigma factor is associated with the core the holoenzyme is formed, which can initiate transcription. The cofactor is Mg(2+). Zn(2+) is required as a cofactor.

It catalyses the reaction RNA(n) + a ribonucleoside 5'-triphosphate = RNA(n+1) + diphosphate. DNA-dependent RNA polymerase catalyzes the transcription of DNA into RNA using the four ribonucleoside triphosphates as substrates. The chain is DNA-directed RNA polymerase subunit beta' from Mycobacteroides abscessus (strain ATCC 19977 / DSM 44196 / CCUG 20993 / CIP 104536 / JCM 13569 / NCTC 13031 / TMC 1543 / L948) (Mycobacterium abscessus).